A 717-amino-acid chain; its full sequence is Delta-1-pyrroline-5-carboxylate synthase (717 aa).

Residues M1–R296 form a glutamate 5-kinase region. Substrate-binding residues include S60, D157, and N176. ATP-binding positions include S196–D197 and R236–K242. A gamma-glutamyl phosphate reductase region spans residues E297–G717.

It in the N-terminal section; belongs to the glutamate 5-kinase family. In the C-terminal section; belongs to the gamma-glutamyl phosphate reductase family. In terms of tissue distribution, expressed at high levels in leaves and is inducible in roots subjected to salt stress.

The catalysed reaction is L-glutamate + ATP = L-glutamyl 5-phosphate + ADP. It carries out the reaction L-glutamate 5-semialdehyde + phosphate + NADP(+) = L-glutamyl 5-phosphate + NADPH + H(+). It participates in amino-acid biosynthesis; L-proline biosynthesis; L-glutamate 5-semialdehyde from L-glutamate: step 1/2. Its pathway is amino-acid biosynthesis; L-proline biosynthesis; L-glutamate 5-semialdehyde from L-glutamate: step 2/2. Its activity is regulated as follows. Feedback regulated by proline. Its function is as follows. P5CS plays a key role in proline biosynthesis, leading to osmoregulation in plants. The polypeptide is Delta-1-pyrroline-5-carboxylate synthase (PRO2) (Solanum lycopersicum (Tomato)).